The primary structure comprises 251 residues: Aliphatic sulfonates import ATP-binding protein SsuB (251 aa).

In terms of domain architecture, ABC transporter spans 3-231 (VSINEVSKYF…PRNKTSQSFQ (229 aa)). 39 to 46 (GPSGCGKS) is an ATP binding site.

Belongs to the ABC transporter superfamily. Aliphatic sulfonates importer (TC 3.A.1.17.2) family. In terms of assembly, the complex is composed of two ATP-binding proteins (SsuB), two transmembrane proteins (SsuC) and a solute-binding protein (SsuA).

The protein resides in the cell membrane. The enzyme catalyses ATP + H2O + aliphatic sulfonate-[sulfonate-binding protein]Side 1 = ADP + phosphate + aliphatic sulfonateSide 2 + [sulfonate-binding protein]Side 1.. Part of the ABC transporter complex SsuABC involved in aliphatic sulfonates import. Responsible for energy coupling to the transport system. The chain is Aliphatic sulfonates import ATP-binding protein SsuB from Bacillus thuringiensis subsp. konkukian (strain 97-27).